The sequence spans 257 residues: NAD-capped RNA hydrolase NudC (257 aa).

Residues Lys-25 and Arg-69 each contribute to the substrate site. The Zn(2+) site is built by Cys-98 and Cys-101. Glu-111 contacts substrate. The Zn(2+) site is built by Cys-116 and Cys-119. Residue Tyr-124 coordinates substrate. Residues 125 to 248 (PQIAPCIIVA…TVARRLIEDT (124 aa)) enclose the Nudix hydrolase domain. Ala-158, Glu-174, and Glu-178 together coordinate a divalent metal cation. A Nudix box motif is present at residues 159 to 180 (GFVEVGETLEQAVAREVMEESG). 192–199 (QPWPFPQS) contributes to the substrate binding site. Residue Glu-219 coordinates a divalent metal cation. Ala-241 is a substrate binding site.

Belongs to the Nudix hydrolase family. NudC subfamily. As to quaternary structure, homodimer. It depends on Mg(2+) as a cofactor. Mn(2+) is required as a cofactor. Requires Zn(2+) as cofactor.

It carries out the reaction a 5'-end NAD(+)-phospho-ribonucleoside in mRNA + H2O = a 5'-end phospho-adenosine-phospho-ribonucleoside in mRNA + beta-nicotinamide D-ribonucleotide + 2 H(+). The enzyme catalyses NAD(+) + H2O = beta-nicotinamide D-ribonucleotide + AMP + 2 H(+). It catalyses the reaction NADH + H2O = reduced beta-nicotinamide D-ribonucleotide + AMP + 2 H(+). MRNA decapping enzyme that specifically removes the nicotinamide adenine dinucleotide (NAD) cap from a subset of mRNAs by hydrolyzing the diphosphate linkage to produce nicotinamide mononucleotide (NMN) and 5' monophosphate mRNA. The NAD-cap is present at the 5'-end of some mRNAs and stabilizes RNA against 5'-processing. Has preference for mRNAs with a 5'-end purine. Catalyzes the hydrolysis of a broad range of dinucleotide pyrophosphates. This chain is NAD-capped RNA hydrolase NudC, found in Escherichia coli (strain 55989 / EAEC).